A 222-amino-acid polypeptide reads, in one-letter code: Thymidylate kinase (222 aa).

ATP is bound by residues Arg29–Thr34 and Arg111. The tract at residues Leu146–Gln170 is LID.

It belongs to the thymidylate kinase family. In terms of assembly, homodimer. The cofactor is Mg(2+).

The enzyme catalyses dTMP + ATP = dTDP + ADP. Its pathway is pyrimidine metabolism; dTTP biosynthesis. In terms of biological role, catalyzes the phosphorylation of thymidine monophosphate (dTMP) to thymidine diphosphate (dTDP), the immediate precursor for the DNA building block dTTP, with ATP as the preferred phosphoryl donor in the presence of Mg(2+). The sequence is that of Thymidylate kinase (dtymk) from Dictyostelium discoideum (Social amoeba).